Reading from the N-terminus, the 350-residue chain is S-adenosylmethionine:tRNA ribosyltransferase-isomerase (350 aa).

It belongs to the QueA family. Monomer.

It is found in the cytoplasm. It catalyses the reaction 7-aminomethyl-7-carbaguanosine(34) in tRNA + S-adenosyl-L-methionine = epoxyqueuosine(34) in tRNA + adenine + L-methionine + 2 H(+). The protein operates within tRNA modification; tRNA-queuosine biosynthesis. Functionally, transfers and isomerizes the ribose moiety from AdoMet to the 7-aminomethyl group of 7-deazaguanine (preQ1-tRNA) to give epoxyqueuosine (oQ-tRNA). The chain is S-adenosylmethionine:tRNA ribosyltransferase-isomerase from Parvibaculum lavamentivorans (strain DS-1 / DSM 13023 / NCIMB 13966).